We begin with the raw amino-acid sequence, 133 residues long: Ribonuclease VapC28 (133 aa).

Residues 1–124 enclose the PINc domain; it reads MIVDTSAIIA…LWKGNDFGHT (124 aa). Mg(2+)-binding residues include D4 and D100.

It belongs to the PINc/VapC protein family. Mg(2+) is required as a cofactor.

Its function is as follows. Toxic component of a type II toxin-antitoxin (TA) system. An RNase. Upon expression in M.smegmatis inhibits colony formation. Its toxic effect is neutralized by coexpression with cognate antitoxin VapB28. In Mycobacterium tuberculosis (strain ATCC 25618 / H37Rv), this protein is Ribonuclease VapC28.